The sequence spans 87 residues: Glutaredoxin (87 aa).

Positions 1 to 87 (MFVVIFGRPG…YAKENLGLFD (87 aa)) constitute a Glutaredoxin domain. C11 and C14 are oxidised to a cystine.

It belongs to the glutaredoxin family. As to quaternary structure, monomer.

It localises to the cytoplasm. Functionally, has a glutathione-disulfide oxidoreductase activity in the presence of NADPH and glutathione reductase. Reduces low molecular weight disulfides and proteins. The chain is Glutaredoxin (grx) from Vibrio cholerae serotype O1 (strain ATCC 39315 / El Tor Inaba N16961).